A 460-amino-acid chain; its full sequence is MSGKSIFDKLWDRHVITGDEGQPQLMYVDQHYIHEVTSPQAFQGLRDAGRKVRRPDLTFGTFDHNVPTVNIFDIRDAISKAQIDKLAENVIEFGIDNASHGSDKQGIVHMVGPETGRTQPGKFIVCGDSHTATHGAFGAIAFGIGTSEVEHVFATQTLWQVKPKKMLVEFTGKPQKGIYSKDYILALIAKYGVACGVGYVVEYRGEAIDRLTMEERMTICNMSIEFGSKMGIMNPDQTTYDYMRGRECVPEDFDAAVADWKTLVSDDDAEYDKVIRMDVSELAPMVTWGTNPSMGVDFDTPFPEVRDMNDERAYHYMGLRPGQKAEDINLGYIFIGSCTNARLSDLQLAARIVKGKKISPNLTAIVVPGSRPVKRAAEKIGLDKIFKDAGFEWREPGCSMCLGMNPDKVPDGVHCASTSNRNFEDRQGFGAKTHLCSPAMAAAAAIAGHFVDVRRMPEVQ.

[4Fe-4S] cluster-binding residues include Cys-338, Cys-398, and Cys-401.

This sequence belongs to the aconitase/IPM isomerase family. LeuC type 1 subfamily. As to quaternary structure, heterodimer of LeuC and LeuD. [4Fe-4S] cluster serves as cofactor.

The catalysed reaction is (2R,3S)-3-isopropylmalate = (2S)-2-isopropylmalate. Its pathway is amino-acid biosynthesis; L-leucine biosynthesis; L-leucine from 3-methyl-2-oxobutanoate: step 2/4. In terms of biological role, catalyzes the isomerization between 2-isopropylmalate and 3-isopropylmalate, via the formation of 2-isopropylmaleate. In Streptococcus thermophilus (strain ATCC BAA-491 / LMD-9), this protein is 3-isopropylmalate dehydratase large subunit.